Here is a 536-residue protein sequence, read N- to C-terminus: Protein scd2/ral3 (536 aa).

The 63-residue stretch at 24–86 (PPRKVIRALY…PVSHFEEIGK (63 aa)) folds into the SH3 1 domain. Positions 88 to 115 (VKSERDSDGSGQISFTDLTTNSSTTRSS) are disordered. Low complexity predominate over residues 101–115 (SFTDLTTNSSTTRSS). An SH3 2 domain is found at 123-185 (SQPLFGIVQF…PLSFIQLRDL (63 aa)). In terms of domain architecture, PX spans 293-413 (SSEPTVVAAM…LFFLPLDGDV (121 aa)). A PB1 domain is found at 459 to 533 (TCKVKVRLGD…ESGVLLFAER (75 aa)).

Scd1, scd2, cdc42, and ras1, in its GTP-bound state, act cooperatively to form a protein complex.

Functionally, required for mating and morphogenesis. Interacts directly with scd1 and with cdc42. May bridge and facilitate scd1 and cdc42 interactions. This chain is Protein scd2/ral3 (scd2), found in Schizosaccharomyces pombe (strain 972 / ATCC 24843) (Fission yeast).